The chain runs to 79 residues: Small ribosomal subunit protein bS16 (79 aa).

It belongs to the bacterial ribosomal protein bS16 family.

The chain is Small ribosomal subunit protein bS16 from Nitratidesulfovibrio vulgaris (strain ATCC 29579 / DSM 644 / CCUG 34227 / NCIMB 8303 / VKM B-1760 / Hildenborough) (Desulfovibrio vulgaris).